A 174-amino-acid polypeptide reads, in one-letter code: Chromophore lyase CpcS/CpeS 1 (174 aa).

The protein belongs to the CpcS/CpeS biliprotein lyase family.

Functionally, covalently attaches a chromophore to Cys residue(s) of phycobiliproteins. This is Chromophore lyase CpcS/CpeS 1 from Trichodesmium erythraeum (strain IMS101).